The primary structure comprises 1134 residues: Error-prone DNA polymerase (1134 aa).

The tract at residues 1–33 (MSYHNPPIPWRELEGRISGRPAPHGHQESHADQ) is disordered.

This sequence belongs to the DNA polymerase type-C family. DnaE2 subfamily.

It localises to the cytoplasm. It catalyses the reaction DNA(n) + a 2'-deoxyribonucleoside 5'-triphosphate = DNA(n+1) + diphosphate. Functionally, DNA polymerase involved in damage-induced mutagenesis and translesion synthesis (TLS). It is not the major replicative DNA polymerase. The polypeptide is Error-prone DNA polymerase (Cutibacterium acnes (strain DSM 16379 / KPA171202) (Propionibacterium acnes)).